A 406-amino-acid polypeptide reads, in one-letter code: UPF0754 membrane protein SYNPCC7002_A1087 (406 aa).

Residues 384–404 (IVNLGGVLGFLVGVAQSVILL) form a helical membrane-spanning segment.

The protein belongs to the UPF0754 family.

Its subcellular location is the cell inner membrane. This Picosynechococcus sp. (strain ATCC 27264 / PCC 7002 / PR-6) (Agmenellum quadruplicatum) protein is UPF0754 membrane protein SYNPCC7002_A1087.